A 227-amino-acid chain; its full sequence is 2,3-bisphosphoglycerate-dependent phosphoglycerate mutase (227 aa).

Substrate contacts are provided by residues 7–14, 20–21, arginine 59, 86–89, lysine 97, 113–114, and 182–183; these read RHGLSEWN, TG, ERHY, RR, and GN. Histidine 8 (tele-phosphohistidine intermediate) is an active-site residue. The active-site Proton donor/acceptor is glutamate 86.

It belongs to the phosphoglycerate mutase family. BPG-dependent PGAM subfamily. As to quaternary structure, homodimer.

The enzyme catalyses (2R)-2-phosphoglycerate = (2R)-3-phosphoglycerate. The protein operates within carbohydrate degradation; glycolysis; pyruvate from D-glyceraldehyde 3-phosphate: step 3/5. In terms of biological role, catalyzes the interconversion of 2-phosphoglycerate and 3-phosphoglycerate. This is 2,3-bisphosphoglycerate-dependent phosphoglycerate mutase from Actinobacillus succinogenes (strain ATCC 55618 / DSM 22257 / CCUG 43843 / 130Z).